The following is a 265-amino-acid chain: Type III pantothenate kinase (265 aa).

6-13 (DVGNTNIV) lines the ATP pocket. Substrate is bound by residues Tyr-100 and 107–110 (GADR). Asp-109 acts as the Proton acceptor in catalysis. A K(+)-binding site is contributed by Asp-129. Thr-132 contributes to the ATP binding site. Thr-184 is a substrate binding site.

Belongs to the type III pantothenate kinase family. As to quaternary structure, homodimer. Requires NH4(+) as cofactor. The cofactor is K(+).

It is found in the cytoplasm. The enzyme catalyses (R)-pantothenate + ATP = (R)-4'-phosphopantothenate + ADP + H(+). The protein operates within cofactor biosynthesis; coenzyme A biosynthesis; CoA from (R)-pantothenate: step 1/5. Functionally, catalyzes the phosphorylation of pantothenate (Pan), the first step in CoA biosynthesis. The chain is Type III pantothenate kinase from Alkaliphilus oremlandii (strain OhILAs) (Clostridium oremlandii (strain OhILAs)).